Here is a 685-residue protein sequence, read N- to C-terminus: Iron(3+)-hydroxamate import system permease protein FhuB (685 aa).

18 consecutive transmembrane segments (helical) span residues 35 to 55 (ALLLLALFVAACWLTWVNFSV), 87 to 107 (LAISLLVGAGLGLVGVLFQQV), 120 to 140 (VATGAQLGITVTTLWAIPGAL), 143 to 163 (QFAALTGACIVGALVFGVAWG), 172 to 192 (ILAGLVVSLYCGAINQLLVIF), 222 to 242 (QLLGGVMLTLLLLRPMTLMGL), 265 to 285 (AIVLSALLVNAVGIIGFIGLF), 302 to 322 (LMLAPLIGALILWLSDQIILW), 328 to 348 (MEVSTGSVTALIGAPLLLWLL), 373 to 393 (LAFAVAGGALLLLATWVALSF), 416 to 436 (WPRILAALMAGVMLAVAGCII), 456 to 476 (AAFGVVLMLFLVPGNAFGWLL), 479 to 499 (GSLGAAATLLIIMIAAGRGGF), 504 to 524 (MLLAGMALSTAFTMLLMMLQA), 553 to 573 (AIVMVILLAIVPLCRRWLTIL), 592 to 612 (IALLALAACLTATATMTIGPL), 632 to 652 (MPHMVISALAGGVLLVFADWC), and 660 to 680 (YQIPAGLLSSFIGAPYFIYLL).

It belongs to the binding-protein-dependent transport system permease family. FecCD subfamily. The complex is composed of two ATP-binding proteins (FhuC), a transmembrane protein (FhuB) and a solute-binding protein (FhuD).

Its subcellular location is the cell inner membrane. Part of the ABC transporter complex FhuCDB involved in iron(3+)-hydroxamate import. Responsible for the translocation of the substrate across the membrane. Involved in ferrioxamine-mediated iron(III) utilization. The sequence is that of Iron(3+)-hydroxamate import system permease protein FhuB (fhuB) from Salmonella typhimurium (strain LT2 / SGSC1412 / ATCC 700720).